The sequence spans 267 residues: HTH-type transcriptional activator CsvR (267 aa).

DNA-binding regions (H-T-H motif) lie at residues 183–204 (AIIA…ESED) and 230–253 (ISQI…NKHF).

In terms of assembly, homodimer.

Functionally, transcriptional activator of fimbrial genes in enterotoxigenic E.coli. The chain is HTH-type transcriptional activator CsvR from Escherichia coli.